The chain runs to 151 residues: MNLSQDGIKLHRGNFTAIGRQIQPYLEEGKCFRMVLKPWREKRSLSQNALSHMWYSEISEYLISRGKTFATPAWVKDALKHTYLGYETKDLVDVVTGDITTIQSLRHTSDLDTGEMYVFLCKVEAWAMNIGCHLTIPQSCEFQLLRDKQEA.

The protein to equivalent protein in phage 82.

This is an uncharacterized protein from Escherichia coli (strain K12).